We begin with the raw amino-acid sequence, 248 residues long: Ureidoacrylate amidohydrolase RutB (248 aa).

The active-site Proton acceptor is aspartate 41. Lysine 150 is a catalytic residue. Cysteine 183 functions as the Nucleophile in the catalytic mechanism.

This sequence belongs to the isochorismatase family. RutB subfamily.

The enzyme catalyses (Z)-3-ureidoacrylate + H2O + H(+) = (Z)-3-aminoacrylate + NH4(+) + CO2. It carries out the reaction (Z)-3-ureidoacrylate + H2O = (Z)-3-aminoacrylate + carbamate + H(+). The catalysed reaction is (Z)-2-methylureidoacrylate + H2O + H(+) = (Z)-2-methylaminoacrylate + NH4(+) + CO2. Hydrolyzes ureidoacrylate to form aminoacrylate and carbamate. The carbamate hydrolyzes spontaneously, thereby releasing one of the nitrogen atoms of the pyrimidine ring as ammonia and one of its carbon atoms as CO2. This Methylorubrum extorquens (strain DSM 6343 / CIP 106787 / DM4) (Methylobacterium extorquens) protein is Ureidoacrylate amidohydrolase RutB.